The sequence spans 336 residues: tRNA-modifying protein YgfZ (336 aa).

Trp-28 and Trp-191 together coordinate folate.

This sequence belongs to the tRNA-modifying YgfZ family.

The protein localises to the cytoplasm. In terms of biological role, folate-binding protein involved in regulating the level of ATP-DnaA and in the modification of some tRNAs. It is probably a key factor in regulatory networks that act via tRNA modification, such as initiation of chromosomal replication. This is tRNA-modifying protein YgfZ from Hamiltonella defensa subsp. Acyrthosiphon pisum (strain 5AT).